We begin with the raw amino-acid sequence, 395 residues long: Digeranylgeranylglycerophospholipid reductase (395 aa).

FAD contacts are provided by alanine 15, aspartate 34, cysteine 45, alanine 46, alanine 48, arginine 97, alanine 121, aspartate 276, and glycine 288. Position 329 (arginine 329) interacts with a 2,3-bis-O-(geranylgeranyl)-sn-glycerol 1-phospholipid.

The protein belongs to the geranylgeranyl reductase family. DGGGPL reductase subfamily. It depends on FAD as a cofactor.

The catalysed reaction is a 2,3-bis-O-phytanyl-sn-glycerol 1-phospholipid + 8 A = a 2,3-bis-O-(geranylgeranyl)-sn-glycerol 1-phospholipid + 8 AH2. It carries out the reaction 2,3-bis-O-(phytanyl)-sn-glycerol 1-phosphate + 8 A = 2,3-bis-O-(geranylgeranyl)-sn-glycerol 1-phosphate + 8 AH2. It catalyses the reaction CDP-2,3-bis-O-(geranylgeranyl)-sn-glycerol + 8 AH2 = CDP-2,3-bis-O-(phytanyl)-sn-glycerol + 8 A. The enzyme catalyses archaetidylserine + 8 AH2 = 2,3-bis-O-phytanyl-sn-glycero-3-phospho-L-serine + 8 A. Its pathway is membrane lipid metabolism; glycerophospholipid metabolism. Its function is as follows. Is involved in the reduction of 2,3-digeranylgeranylglycerophospholipids (unsaturated archaeols) into 2,3-diphytanylglycerophospholipids (saturated archaeols) in the biosynthesis of archaeal membrane lipids. Catalyzes the formation of archaetidic acid (2,3-di-O-phytanyl-sn-glyceryl phosphate) from 2,3-di-O-geranylgeranylglyceryl phosphate (DGGGP) via the hydrogenation of each double bond of the isoprenoid chains. Is also probably able to reduce double bonds of geranyl groups in CDP-2,3-bis-O-(geranylgeranyl)-sn-glycerol and archaetidylserine, thus acting at various stages in the biosynthesis of archaeal membrane lipids. The protein is Digeranylgeranylglycerophospholipid reductase of Thermococcus kodakarensis (strain ATCC BAA-918 / JCM 12380 / KOD1) (Pyrococcus kodakaraensis (strain KOD1)).